A 365-amino-acid polypeptide reads, in one-letter code: Phospho-N-acetylmuramoyl-pentapeptide-transferase (365 aa).

The next 10 helical transmembrane spans lie at 22–42 (YISV…LALG), 74–94 (TMGG…WGNL), 95–115 (TSIY…IGFF), 134–154 (KFAL…YLLS), 168–188 (SLYI…IING), 201–221 (GLAI…AYIE), 240–260 (LAEV…FLWF), 267–287 (VFMG…IAVM), 292–312 (LIFF…MLQV), and 342–362 (KVVI…FAAI).

The protein belongs to the glycosyltransferase 4 family. MraY subfamily. The cofactor is Mg(2+).

It is found in the cell inner membrane. The catalysed reaction is UDP-N-acetyl-alpha-D-muramoyl-L-alanyl-gamma-D-glutamyl-meso-2,6-diaminopimeloyl-D-alanyl-D-alanine + di-trans,octa-cis-undecaprenyl phosphate = di-trans,octa-cis-undecaprenyl diphospho-N-acetyl-alpha-D-muramoyl-L-alanyl-D-glutamyl-meso-2,6-diaminopimeloyl-D-alanyl-D-alanine + UMP. It functions in the pathway cell wall biogenesis; peptidoglycan biosynthesis. Its function is as follows. Catalyzes the initial step of the lipid cycle reactions in the biosynthesis of the cell wall peptidoglycan: transfers peptidoglycan precursor phospho-MurNAc-pentapeptide from UDP-MurNAc-pentapeptide onto the lipid carrier undecaprenyl phosphate, yielding undecaprenyl-pyrophosphoryl-MurNAc-pentapeptide, known as lipid I. In Francisella tularensis subsp. holarctica (strain OSU18), this protein is Phospho-N-acetylmuramoyl-pentapeptide-transferase.